A 196-amino-acid polypeptide reads, in one-letter code: Histone H1.0 (196 aa).

Disordered regions lie at residues 1 to 29 and 78 to 196; these read MTEN…PKYS and SGTL…GRKK. In terms of domain architecture, H15 spans 24–97; it reads DHPKYSDMIL…GASGSFRLAK (74 aa). Over residues 104–196 the composition is skewed to basic residues; the sequence is PAKKPKKEIK…ASPKKSGRKK (93 aa).

It belongs to the histone H1/H5 family.

It localises to the nucleus. Its subcellular location is the chromosome. In terms of biological role, histones H1 are necessary for the condensation of nucleosome chains into higher-order structures. The histones H1.0 are found in cells that are in terminal stages of differentiation or that have low rates of cell division. The chain is Histone H1.0 (h1-0) from Xenopus tropicalis (Western clawed frog).